The following is a 258-amino-acid chain: (S)-hydroxynitrile lyase (258 aa).

In terms of domain architecture, AB hydrolase-1 spans 5-242 (HFVLIHTICH…GGDHKLQLTK (238 aa)). Residues T11 and S80 each coordinate 2-hydroxy-2-methylpropanenitrile. Acetone-binding residues include T11, S80, and C81. The active-site Proton donor/acceptor is the S80. The Proton donor/acceptor role is filled by H236.

The protein belongs to the AB hydrolase superfamily. Hydroxynitrile lyase family. Homotetramer.

The enzyme catalyses a monosubstituted aliphatic (S)-hydroxynitrile = an aldehyde + hydrogen cyanide. The catalysed reaction is a disubstituted aliphatic (S)-hydroxynitrile = a ketone + hydrogen cyanide. It carries out the reaction an aromatic (S)-hydroxynitrile = an aromatic aldehyde + hydrogen cyanide. It catalyses the reaction 2-hydroxy-2-methylpropanenitrile = acetone + hydrogen cyanide. The enzyme catalyses butan-2-one + hydrogen cyanide = 2-hydroxy-2-methylbutanenitrile. The catalysed reaction is pentan-2-one + hydrogen cyanide = (2S)-2-hydroxy-2-methylpentanenitrile. It carries out the reaction hexan-2-one + hydrogen cyanide = (2S)-2-hydroxy-2-methylhexanenitrile. It catalyses the reaction heptan-2-one + hydrogen cyanide = (2S)-2-hydroxy-2-methylheptanenitrile. The enzyme catalyses 4-methylpentan-2-one + hydrogen cyanide = (2S)-2-hydroxy-2,4-dimethylpentanenitrile. The catalysed reaction is 3,3-dimethylbutan-2-one + hydrogen cyanide = (2S)-2-hydroxy-2-methyl-3,3-dimethylbutanenitrile. It carries out the reaction acetophenone + hydrogen cyanide = (2S)-2-hydroxy-2-phenylpropanenitrile. It catalyses the reaction propanal + hydrogen cyanide = (2S)-2-hydroxybutanenitrile. The enzyme catalyses pentanal + hydrogen cyanide = (2S)-2-hydroxyhexanenitrile. The catalysed reaction is 2-methylpropanal + hydrogen cyanide = (2S)-2-hydroxy-3-methylbutanenitrile. It carries out the reaction 2,2-dimethylpropanal + hydrogen cyanide = (2S)-2-hydroxy-3,3-dimethylbutanenitrile. It catalyses the reaction acrolein + hydrogen cyanide = (2S)-2-hydroxybut-3-enenitrile. The enzyme catalyses (2E)-but-2-enal + hydrogen cyanide = (2S,3E)-2-hydroxypent-3-enenitrile. The catalysed reaction is (E)-hex-2-enal + hydrogen cyanide = (2S,3E)-2-hydroxyhept-3-enenitrile. It carries out the reaction cyclohexanecarbaldehyde + hydrogen cyanide = (2S)-2-cyclohexyl-2-hydroxyacetonitrile. It catalyses the reaction benzaldehyde + hydrogen cyanide = (S)-mandelonitrile. The enzyme catalyses 4-methoxybenzaldehyde + hydrogen cyanide = (2S)-2-hydroxy-2-(4-methoxyphenyl)acetonitrile. The catalysed reaction is piperonal + hydrogen cyanide = (2S)-2-(2H-1,3-benzodioxol-5-yl)-2-hydroxyacetonitrile. It carries out the reaction formylthiophene + hydrogen cyanide = (2R)-2-hydroxy-2-(thiophen-2-yl)acetonitrile. It catalyses the reaction 3-formylthiophene + hydrogen cyanide = (2S)-2-hydroxy-2-(thiophen-3-yl)acetonitrile. The enzyme catalyses furan-3-carbaldehyde + hydrogen cyanide = (2S)-2-(furan-3-yl)-2-hydroxyacetonitrile. Functionally, involved in cyanogenesis, the release of HCN from cyanogenic glycosides in injured tissues; the release of toxic HCN is believed to play a central role in the defense mechanism of plants against herbivores and microbial attack. Decomposes a variety of cyanohydrins (alpha-hydroxynitriles) into HCN and the corresponding aldehydes or ketones; two natural substrates are 2-hydroxy-2-methylpropanenitrile (acetone cyanohydrin) and 2-hydroxy-2-methylbutanenitrile (2-butanone cyanohydrin), but in vitro can also act on 2-hydroxy-2-methylpentanenitrile (2-pentanone cyanohydrin) and mandelonitrile. Is also able to catalyze the reverse reaction in vitro, leading to the stereospecific synthesis of aliphatic, aromatic, and heterocyclic cyanohydrins, important intermediates in the production of various agrochemicals or pharmaceuticals. The polypeptide is (S)-hydroxynitrile lyase (Manihot esculenta (Cassava)).